Reading from the N-terminus, the 521-residue chain is Sodium/hydrogen exchanger 5 (521 aa).

The Cytoplasmic segment spans residues 1-23 (MEEVMISPVEHDPQGQVKQQQAA). The chain crosses the membrane as a helical span at residues 24-44 (GVGILLQIMMLVLSFVLGHVL). Topologically, residues 45–48 (RRHR) are lumenal. Residues 49–69 (FHYLPEASGSLLIGLIVGILA) form a helical membrane-spanning segment. The Cytoplasmic segment spans residues 70-86 (NISDTETSIRTWFNFHE). An intramembrane region (helical) is located at residues 87 to 107 (EFFFLFLLPPIIFQSGFSLQP). Topologically, residues 108-115 (KPFFSNFG) are cytoplasmic. A helical transmembrane segment spans residues 116 to 136 (AIVTFAIIGTFVASVVTGGLV). The Lumenal segment spans residues 137-141 (YLGGS). 2 consecutive intramembrane regions (helical) follow at residues 142–162 (MYLM…LISA) and 166–186 (VTVL…ALVF). Residues 187–222 (GESVLNDAMAISLYRTMSLVNRQSSSGEHFFMVVIR) are Lumenal-facing. A helical transmembrane segment spans residues 223-243 (FFETFAGSMSAGVGVGFTSAL). The Cytoplasmic portion of the chain corresponds to 244-271 (LFKYAGLDTENLQNLECCLFVLFPYFSY). The chain crosses the membrane as a helical span at residues 272–292 (MLAEGVGLSGIVSILFTGIVM). Topologically, residues 293–310 (KRYTFSNLSEASQSFVSS) are lumenal. Residue N299 is glycosylated (N-linked (GlcNAc...) asparagine). Residues 311 to 331 (FFHLISSLAETFTFIYMGFDI) traverse the membrane as a helical segment. The Cytoplasmic portion of the chain corresponds to 332–340 (AMEQHSWSH). A helical membrane pass occupies residues 341 to 361 (VGFILFSILFIGVARAVNVFG). The Lumenal portion of the chain corresponds to 362 to 382 (CAYLVNLFRQENQKIPMKHQK). A helical membrane pass occupies residues 383–402 (ALWYSGLRGAMAFALALQSL). The Cytoplasmic portion of the chain corresponds to 403–411 (HDLPEGHGQ). The helical transmembrane segment at 412 to 432 (IIFTATTTIVVVTVLLIGGST) threads the bilayer. The Lumenal segment spans residues 433–521 (GKMLEALEVV…NSGDGDGDGE (89 aa)). Residues 453–480 (GFEESDHQYVPPPFSIGASSDEDTSSSG) are disordered. Residues 467 to 480 (SIGASSDEDTSSSG) show a composition bias toward low complexity.

The protein belongs to the monovalent cation:proton antiporter 1 (CPA1) transporter (TC 2.A.36) family. In terms of tissue distribution, expressed in roots, leaves, stems, flowers and siliques. Detected at low levels in roots and shoots.

It is found in the endosome membrane. It localises to the golgi apparatus. Its subcellular location is the trans-Golgi network membrane. The protein resides in the golgi stack membrane. The enzyme catalyses Na(+)(in) + H(+)(out) = Na(+)(out) + H(+)(in). The catalysed reaction is K(+)(in) + H(+)(out) = K(+)(out) + H(+)(in). Its function is as follows. Involved in trafficking to the vacuole. Required for cell proliferation and cell expansion, but not for cell differentiation. Acts in low affinity electroneutral exchange of protons for cations such as Na(+) or K(+) across membranes. May also exchange Li(+) and Cs(+) with a lower affinity. This Arabidopsis thaliana (Mouse-ear cress) protein is Sodium/hydrogen exchanger 5 (NHX5).